Here is a 144-residue protein sequence, read N- to C-terminus: Large ribosomal subunit protein uL15 (144 aa).

The segment at G20–G49 is disordered. A compositionally biased stretch (gly residues) spans R21–G31.

It belongs to the universal ribosomal protein uL15 family. As to quaternary structure, part of the 50S ribosomal subunit.

Functionally, binds to the 23S rRNA. The sequence is that of Large ribosomal subunit protein uL15 from Neisseria meningitidis serogroup A / serotype 4A (strain DSM 15465 / Z2491).